The primary structure comprises 252 residues: Proteasome subunit alpha type-7-1B (252 aa).

The protein belongs to the peptidase T1A family. In terms of assembly, the 26S proteasome consists of a 20S proteasome core and two 19S regulatory subunits. The 20S proteasome core is composed of 28 subunits that are arranged in four stacked rings, resulting in a barrel-shaped structure. The two end rings are each formed by seven alpha subunits, and the two central rings are each formed by seven beta subunits. The catalytic chamber with the active sites is on the inside of the barrel. As to expression, testis specific.

It is found in the cytoplasm. The protein resides in the nucleus. The proteasome is a multicatalytic proteinase complex which is characterized by its ability to cleave peptides with Arg, Phe, Tyr, Leu, and Glu adjacent to the leaving group at neutral or slightly basic pH. The proteasome has an ATP-dependent proteolytic activity. The polypeptide is Proteasome subunit alpha type-7-1B (Prosalpha4T2) (Drosophila melanogaster (Fruit fly)).